The sequence spans 315 residues: Transaldolase (315 aa).

Residue K131 is the Schiff-base intermediate with substrate of the active site.

Belongs to the transaldolase family. Type 1 subfamily. In terms of assembly, homodimer.

It localises to the cytoplasm. The enzyme catalyses D-sedoheptulose 7-phosphate + D-glyceraldehyde 3-phosphate = D-erythrose 4-phosphate + beta-D-fructose 6-phosphate. The protein operates within carbohydrate degradation; pentose phosphate pathway; D-glyceraldehyde 3-phosphate and beta-D-fructose 6-phosphate from D-ribose 5-phosphate and D-xylulose 5-phosphate (non-oxidative stage): step 2/3. In terms of biological role, transaldolase is important for the balance of metabolites in the pentose-phosphate pathway. In Actinobacillus pleuropneumoniae serotype 7 (strain AP76), this protein is Transaldolase.